Here is a 468-residue protein sequence, read N- to C-terminus: POC1 centriolar protein homolog B (468 aa).

WD repeat units follow at residues 16–55, 58–97, 100–139, 142–181, 184–223, 226–265, and 268–307; these read GHKD…RAYK, GHKE…ESTV, AHTA…FLFS, QHTN…CINT, DYKG…LLQH, VHNA…LIYT, and GHQG…YSVK. The stretch at 420–459 forms a coiled coil; that stretch reads NTLEQIVDQLNVLTQTVSILEHRLTLTEDKLKECLENQQK.

It belongs to the WD repeat POC1 family. As to quaternary structure, interacts with pat. Highly expressed in ovary and, at low levels, in testis.

It is found in the cytoplasm. Its subcellular location is the cytoskeleton. It localises to the microtubule organizing center. The protein resides in the centrosome. The protein localises to the centriole. Its function is as follows. Plays an important role in centriole assembly and/or stability and ciliogenesis. Involved in early steps of centriole duplication, as well as in the later steps of centriole length control. The protein is POC1 centriolar protein homolog B (poc1b) of Xenopus laevis (African clawed frog).